Here is a 339-residue protein sequence, read N- to C-terminus: Tetraacyldisaccharide 4'-kinase (339 aa).

ATP is bound at residue 62 to 69 (VAGGTGKT).

It belongs to the LpxK family.

It catalyses the reaction a lipid A disaccharide + ATP = a lipid IVA + ADP + H(+). Its pathway is glycolipid biosynthesis; lipid IV(A) biosynthesis; lipid IV(A) from (3R)-3-hydroxytetradecanoyl-[acyl-carrier-protein] and UDP-N-acetyl-alpha-D-glucosamine: step 6/6. Transfers the gamma-phosphate of ATP to the 4'-position of a tetraacyldisaccharide 1-phosphate intermediate (termed DS-1-P) to form tetraacyldisaccharide 1,4'-bis-phosphate (lipid IVA). In Xylella fastidiosa (strain M12), this protein is Tetraacyldisaccharide 4'-kinase.